The primary structure comprises 780 residues: MVEEDLNQIGGNSNYNGEGGDPESNTLNQPLVKANRTLSSTPLALVGAKVSHIESLDYEINENDLFKHDWRKRSKAQVLQYVFLKWTLACLVGLFTGLIATLINLAVENIAGYKLLAVGHFLTQERYVTGLMVLVGANLGLTLVASVLCVCFAPTAAGPGIPEIKAYLNGVDTPNMFGATTMIVKIVGSIGAVAAGLDLGKEGPLVHIGSCIASLLGQGGTDNHRIKWRWLRYFNNDRDRRDLITCGSAAGVCAAFRSPVGGVLFALEEVATWWRSALLWRTFFSTAVVVVVLREFIEICNSGKCGLFGKGGLIMFDVSHVTYTYHVTDIIPVMLIGVIGGILGSLYNHLLHKVLRLYNLINEKGKIHKVLLSLTVSLFTSVCLYGLPFLAKCKPCDPSIDEICPTNGRSGNFKQFHCPKGYYNDLATLLLTTNDDAVRNLFSSNTPNEFGMGSLWIFFVLYCILGLFTFGIATPSGLFLPIILMGAAYGRMLGAAMGSYTSIDQGLYAVLGAAALMAGSMRMTVSLCVIFLELTNNLLLLPITMIVLLIAKTVGDSFNPSIYDIILHLKGLPFLEANPEPWMRNLTVGELGDAKPPVVTLQGVEKVSNIVDVLKNTTHNAFPVLDEAEVPQVGLATGATELHGLILRAHLVKVLKKRWFLTEKRRTEEWEVREKFPWDELAEREDNFDDVAITSAEMEMYVDLHPLTNTTPYTVMENMSVAKALVLFRQVGLRHLLIVPKIQASGMCPVVGILTRQDLRAYNILQAFPLLEKSKGGKTH.

The disordered stretch occupies residues 1-28 (MVEEDLNQIGGNSNYNGEGGDPESNTLN). The next 12 membrane-spanning stretches (helical) occupy residues 87–107 (TLACLVGLFTGLIATLINLAV), 130–150 (GLMVLVGANLGLTLVASVLCV), 177–197 (FGATTMIVKIVGSIGAVAAGL), 205–225 (LVHIGSCIASLLGQGGTDNHR), 247–267 (GSAAGVCAAFRSPVGGVLFAL), 277–297 (ALLWRTFFSTAVVVVVLREFI), 327–347 (VTDIIPVMLIGVIGGILGSLY), 370–390 (VLLSLTVSLFTSVCLYGLPFL), 452–472 (MGSLWIFFVLYCILGLFTFGI), 477–497 (GLFLPIILMGAAYGRMLGAAM), 509–529 (AVLGAAALMAGSMRMTVSLCV), and 530–550 (IFLELTNNLLLLPITMIVLLI). CBS domains follow at residues 594–663 (AKPP…FLTE) and 708–770 (TNTT…AFPL). Residues 735 to 755 (HLLIVPKIQASGMCPVVGILT) traverse the membrane as a helical segment.

Belongs to the chloride channel (TC 2.A.49) family. Homodimer. Interacts with PP2A5. In terms of tissue distribution, broadly expressed in the plant.

It is found in the membrane. Voltage-gated chloride channel. The protein is Chloride channel protein CLC-b (CLC-B) of Arabidopsis thaliana (Mouse-ear cress).